The primary structure comprises 302 residues: 1D-myo-inositol 2-acetamido-2-deoxy-alpha-D-glucopyranoside deacetylase (302 aa).

Histidine 12, aspartate 15, and histidine 147 together coordinate Zn(2+).

Belongs to the MshB deacetylase family. The cofactor is Zn(2+).

It carries out the reaction 1D-myo-inositol 2-acetamido-2-deoxy-alpha-D-glucopyranoside + H2O = 1D-myo-inositol 2-amino-2-deoxy-alpha-D-glucopyranoside + acetate. Functionally, catalyzes the deacetylation of 1D-myo-inositol 2-acetamido-2-deoxy-alpha-D-glucopyranoside (GlcNAc-Ins) in the mycothiol biosynthesis pathway. The sequence is that of 1D-myo-inositol 2-acetamido-2-deoxy-alpha-D-glucopyranoside deacetylase from Thermobispora bispora (strain ATCC 19993 / DSM 43833 / CBS 139.67 / JCM 10125 / KCTC 9307 / NBRC 14880 / R51).